A 257-amino-acid chain; its full sequence is AA9 family lytic polysaccharide monooxygenase U (257 aa).

Residues 1 to 19 (MKLYLAAFLGAVATPGAFA) form the signal peptide. Position 20 (His20) interacts with Cu(2+). Asn29 and Asn71 each carry an N-linked (GlcNAc...) asparagine glycan. An intrachain disulfide couples Cys74 to Cys194. His113 provides a ligand contact to Cu(2+). N-linked (GlcNAc...) asparagine glycosylation occurs at Asn161. Gln189 is a binding site for O2. Tyr191 contacts Cu(2+).

The protein belongs to the polysaccharide monooxygenase AA9 family. Cu(2+) is required as a cofactor.

It localises to the secreted. The catalysed reaction is [(1-&gt;4)-beta-D-glucosyl]n+m + reduced acceptor + O2 = 4-dehydro-beta-D-glucosyl-[(1-&gt;4)-beta-D-glucosyl]n-1 + [(1-&gt;4)-beta-D-glucosyl]m + acceptor + H2O.. Its function is as follows. Lytic polysaccharide monooxygenase (LPMO) that depolymerizes crystalline and amorphous polysaccharides via the oxidation of scissile alpha- or beta-(1-4)-glycosidic bonds, yielding C1 and C4 oxidation products. Catalysis by LPMOs requires the reduction of the active-site copper from Cu(II) to Cu(I) by a reducing agent and H(2)O(2) or O(2) as a cosubstrate. Shows no activity on wheat arabinoxylan, konjac glucomannan, acetylated spruce galactoglucomannan, or cellopentaose. In Thermothielavioides terrestris (strain ATCC 38088 / NRRL 8126) (Thielavia terrestris), this protein is AA9 family lytic polysaccharide monooxygenase U.